The chain runs to 417 residues: Serpin H1 (417 aa).

Positions 1-17 (MRSLLLGTLCLLAVALA) are cleaved as a signal peptide. The residue at position 93 (Lys-93) is an N6-succinyllysine. Asn-119 and Asn-124 each carry an N-linked (GlcNAc...) asparagine glycan. At Ser-140 the chain carries Phosphoserine. Position 206 is an N6-acetyllysine (Lys-206). Lys-295 carries the N6-succinyllysine modification. Lys-318 is subject to N6-acetyllysine. The N-linked (GlcNAc...) asparagine glycan is linked to Asn-394. The Prevents secretion from ER motif lies at 414 to 417 (RDEL).

It belongs to the serpin family.

The protein localises to the endoplasmic reticulum lumen. Functionally, binds specifically to collagen. Could be involved as a chaperone in the biosynthetic pathway of collagen. The chain is Serpin H1 (Serpinh1) from Rattus norvegicus (Rat).